Consider the following 255-residue polypeptide: (R)-S-adenosyl-L-methionine hydrolase (255 aa).

The adenosine site is built by Asp-9, Asp-70, and Asn-186. (R)-S-adenosyl-L-methionine contacts are provided by Asn-186, Ser-227, Glu-232, and Val-235. Val-235 contributes to the adenosine binding site.

Belongs to the SAM hydrolase / SAM-dependent halogenase family. Homotrimer.

The catalysed reaction is (R)-S-adenosyl-L-methionine + H2O = adenosine + L-methionine + H(+). Functionally, catalyzes the hydrolysis of S-adenosyl-L-methionine (SAM) into adenosine and L-methionine. Does not have chlorinase or fluorinase activity. This Thermus thermophilus (strain ATCC 27634 / DSM 579 / HB8) protein is (R)-S-adenosyl-L-methionine hydrolase.